Reading from the N-terminus, the 223-residue chain is Transmembrane protein 235 (223 aa).

The first 28 residues, 1 to 28, serve as a signal peptide directing secretion; that stretch reads MARLGALLLAAALGALLSFALLAAAVAS. Residue Asn-41 is glycosylated (N-linked (GlcNAc...) asparagine). Helical transmembrane passes span 96–116, 126–146, and 176–196; these read VIVV…CGLL, LLFT…GVSI, and WSMA…TLLL.

Belongs to the PMP-22/EMP/MP20 family. In terms of processing, N-glycosylated.

The protein localises to the membrane. The protein resides in the endoplasmic reticulum. This chain is Transmembrane protein 235 (TMEM235), found in Homo sapiens (Human).